The chain runs to 180 residues: UPF0340 protein LACR_0494 (180 aa).

The protein belongs to the UPF0340 family.

The protein is UPF0340 protein LACR_0494 of Lactococcus lactis subsp. cremoris (strain SK11).